The sequence spans 296 residues: MSLHSPGKAFRAALTKENPLQIVGTINANHALLAQRAGYQAIYLSGGGVAAGSLGLPDLGISTLDDVLTDIRRITDVCSLPLLVDADIGFGSSAFNVARTVKSMIKAGAAGLHIEDQVGAKRCGHRPNKAIVSKEEMVDRIRAAVDAKTDPDFVIMARTDALAVEGLDAAIERAQAYVEAGAEMLFPEAITELAMYRQFADAVQVPILANITEFGATPLFTTDELRSAHVAMALYPLSAFRAMNRAAEHVYNVLRQEGTQKSVIDTMQTRNELYESINYYQYEEKLDNLFARSQVK.

45–47 serves as a coordination point for substrate; that stretch reads SGG. D85 and D87 together coordinate Mg(2+). Substrate contacts are provided by residues 123–124, R158, E188, 210–212, R241, and R270; these read CG and NIT.

Belongs to the isocitrate lyase/PEP mutase superfamily. Methylisocitrate lyase family. As to quaternary structure, homotetramer; dimer of dimers. Requires Mg(2+) as cofactor.

The catalysed reaction is (2S,3R)-3-hydroxybutane-1,2,3-tricarboxylate = pyruvate + succinate. It functions in the pathway organic acid metabolism; propanoate degradation. In terms of biological role, involved in the catabolism of short chain fatty acids (SCFA) via the 2-methylcitrate cycle I (propionate degradation route). Catalyzes the thermodynamically favored C-C bond cleavage of (2R,3S)-2-methylisocitrate to yield pyruvate and succinate via an alpha-carboxy-carbanion intermediate. The protein is 2-methylisocitrate lyase of Escherichia coli (strain K12).